A 51-amino-acid polypeptide reads, in one-letter code: Large ribosomal subunit protein eL39 (51 aa).

Belongs to the eukaryotic ribosomal protein eL39 family. As to quaternary structure, interacts with impact.

This chain is Large ribosomal subunit protein eL39 (rpl39), found in Ictalurus punctatus (Channel catfish).